The following is a 287-amino-acid chain: Taxis protein CheF2 (287 aa).

As to quaternary structure, interacts with chemotaxis (Che) proteins as well as flagella accessory (Fla) proteins.

In terms of biological role, involved in taxis signal transduction. The sequence is that of Taxis protein CheF2 (cheF2) from Halobacterium salinarum (strain ATCC 29341 / DSM 671 / R1).